A 180-amino-acid chain; its full sequence is Non-structural protein 4 (180 aa).

2 helical membrane-spanning segments follow: residues 16-36 (VCVH…VTVI) and 52-72 (IVST…AILG).

The protein resides in the host membrane. In Banna virus (BAV), this protein is Non-structural protein 4 (Segment-11).